The following is a 954-amino-acid chain: Translation initiation factor IF-2 (954 aa).

Positions 56 to 75 are enriched in low complexity; it reads KAAAPAAPKAPAPAAESRPA. A disordered region spans residues 56-355; the sequence is KAAAPAAPKA…GVSVPRGDGN (300 aa). Over residues 76–87 the composition is skewed to pro residues; the sequence is APAPGPAAPKAP. Composition is skewed to low complexity over residues 88–125 and 138–151; these read APKVEAPAPAAPAASAPAAPQASSAAPAAPSTGAKPGA and PRQGGSSQGSSAPR. The segment covering 241-254 has biased composition (pro residues); the sequence is PGAPRPGGPRPTPG. Gly residues predominate over residues 269 to 322; it reads GRPGGGGRGPGRPGAPGTGGPGGGGGAPAGGGFGKGGRGRGGTQGAFGKGGAGR. Positions 323-332 are enriched in basic residues; it reads GKQRKSKRAK. The region spanning 447-618 is the tr-type G domain; that stretch reads PRAPVVTVMG…AVLLTADAAL (172 aa). The G1 stretch occupies residues 456 to 463; the sequence is GHVDHGKT. Position 456-463 (456-463) interacts with GTP; the sequence is GHVDHGKT. A G2 region spans residues 481-485; that stretch reads GITQH. A G3 region spans residues 506 to 509; that stretch reads DTPG. Residues 506-510 and 560-563 each bind GTP; these read DTPGH and NKID. Positions 560-563 are G4; the sequence is NKID. The G5 stretch occupies residues 596–598; that stretch reads SAR.

It belongs to the TRAFAC class translation factor GTPase superfamily. Classic translation factor GTPase family. IF-2 subfamily.

The protein resides in the cytoplasm. One of the essential components for the initiation of protein synthesis. Protects formylmethionyl-tRNA from spontaneous hydrolysis and promotes its binding to the 30S ribosomal subunits. Also involved in the hydrolysis of GTP during the formation of the 70S ribosomal complex. The sequence is that of Translation initiation factor IF-2 from Pseudarthrobacter chlorophenolicus (strain ATCC 700700 / DSM 12829 / CIP 107037 / JCM 12360 / KCTC 9906 / NCIMB 13794 / A6) (Arthrobacter chlorophenolicus).